We begin with the raw amino-acid sequence, 883 residues long: Puromycin-sensitive aminopeptidase (883 aa).

Substrate-binding positions include Glu-125 and 265–269; that span reads GAMEN. Residue His-301 coordinates Zn(2+). The Proton acceptor role is filled by Glu-302. The Zn(2+) site is built by His-305 and Glu-324.

The protein belongs to the peptidase M1 family. The cofactor is Zn(2+).

The catalysed reaction is Release of an N-terminal amino acid, preferentially alanine, from a wide range of peptides, amides and arylamides.. Its activity is regulated as follows. Strongly inhibited by puromycin and DAMPAQ-22. Its function is as follows. Aminopeptidase with broad substrate specificity for several peptides. Involved in proteolytic events essential for cell growth and viability. Plays an essential role during prophase I of meiosis. Required for correct meiotic reconbination in both male and female gametophytes. The protein is Puromycin-sensitive aminopeptidase (MPA1) of Arabidopsis thaliana (Mouse-ear cress).